The primary structure comprises 357 residues: DNA integrity scanning protein DisA (357 aa).

The 139-residue stretch at 8–146 folds into the DAC domain; the sequence is VKSIINILQL…GNLRYTLKDI (139 aa). ATP contacts are provided by residues glycine 75, leucine 93, and 106 to 110; that span reads MRHRT.

The protein belongs to the DisA family. As to quaternary structure, homooctamer. Requires Mg(2+) as cofactor.

It carries out the reaction 2 ATP = 3',3'-c-di-AMP + 2 diphosphate. Functionally, participates in a DNA-damage check-point that is active prior to asymmetric division when DNA is damaged. DisA forms globular foci that rapidly scan along the chromosomes during sporulation, searching for lesions. When a lesion is present, DisA pauses at the lesion site. This triggers a cellular response that culminates in a temporary block in sporulation initiation. In terms of biological role, also has diadenylate cyclase activity, catalyzing the condensation of 2 ATP molecules into cyclic di-AMP (c-di-AMP). c-di-AMP acts as a signaling molecule that couples DNA integrity with progression of sporulation. The rise in c-di-AMP level generated by DisA while scanning the chromosome, operates as a positive signal that advances sporulation; upon encountering a lesion, the DisA focus arrests at the damaged site and halts c-di-AMP synthesis. This Bacillus cereus (strain B4264) protein is DNA integrity scanning protein DisA.